The following is a 192-amino-acid chain: Pyridoxal 5'-phosphate synthase subunit PdxT (192 aa).

47-49 (GES) contacts L-glutamine. The active-site Nucleophile is the Cys78. Residues Arg105 and 139–140 (IR) contribute to the L-glutamine site. Active-site charge relay system residues include His175 and Glu177.

The protein belongs to the glutaminase PdxT/SNO family. In the presence of PdxS, forms a dodecamer of heterodimers. Only shows activity in the heterodimer.

It carries out the reaction aldehydo-D-ribose 5-phosphate + D-glyceraldehyde 3-phosphate + L-glutamine = pyridoxal 5'-phosphate + L-glutamate + phosphate + 3 H2O + H(+). The catalysed reaction is L-glutamine + H2O = L-glutamate + NH4(+). The protein operates within cofactor biosynthesis; pyridoxal 5'-phosphate biosynthesis. Functionally, catalyzes the hydrolysis of glutamine to glutamate and ammonia as part of the biosynthesis of pyridoxal 5'-phosphate. The resulting ammonia molecule is channeled to the active site of PdxS. The polypeptide is Pyridoxal 5'-phosphate synthase subunit PdxT (Solibacter usitatus (strain Ellin6076)).